The following is a 243-amino-acid chain: Tyrosine recombinase XerD-like (243 aa).

One can recognise a Core-binding (CB) domain in the interval 1 to 72 (MKEYIRPFLN…AVNQFLYFLY (72 aa)). In terms of domain architecture, Tyr recombinase spans 85–243 (LPKVSVSKEQ…KTMITLEKYR (159 aa)). Residues Lys149 and Arg210 contribute to the active site. The active-site O-(3'-phospho-DNA)-tyrosine intermediate is the Tyr242.

This sequence belongs to the 'phage' integrase family. XerD-like subfamily.

The protein localises to the cytoplasm. Putative tyrosine recombinase. Not involved in the cutting and rejoining of the recombining DNA molecules on dif(SL) site. The protein is Tyrosine recombinase XerD-like of Streptococcus sanguinis (strain SK36).